We begin with the raw amino-acid sequence, 419 residues long: Pyrophosphate--fructose 6-phosphate 1-phosphotransferase (419 aa).

G13 is a binding site for diphosphate. Substrate contacts are provided by residues 142–144 (TVD), 190–192 (MGR), E247, and 297–300 (YLQR). The Proton acceptor role is filled by D144.

Belongs to the phosphofructokinase type A (PFKA) family. PPi-dependent PFK group II subfamily. Clade 'B2' sub-subfamily. As to quaternary structure, homodimer. Requires Mg(2+) as cofactor.

The protein resides in the cytoplasm. The enzyme catalyses beta-D-fructose 6-phosphate + diphosphate = beta-D-fructose 1,6-bisphosphate + phosphate + H(+). The protein operates within carbohydrate degradation; glycolysis; D-glyceraldehyde 3-phosphate and glycerone phosphate from D-glucose: step 3/4. Its activity is regulated as follows. Non-allosteric. Catalyzes the phosphorylation of D-fructose 6-phosphate, the first committing step of glycolysis. Uses inorganic phosphate (PPi) as phosphoryl donor instead of ATP like common ATP-dependent phosphofructokinases (ATP-PFKs), which renders the reaction reversible, and can thus function both in glycolysis and gluconeogenesis. Consistently, PPi-PFK can replace the enzymes of both the forward (ATP-PFK) and reverse (fructose-bisphosphatase (FBPase)) reactions. The chain is Pyrophosphate--fructose 6-phosphate 1-phosphotransferase from Halomonas elongata (strain ATCC 33173 / DSM 2581 / NBRC 15536 / NCIMB 2198 / 1H9).